The following is a 428-amino-acid chain: Palmitoyltransferase ZDHHC23-B (428 aa).

At 1–82 (MSIMKKRSSR…RVPWISGARQ (82 aa)) the chain is on the cytoplasmic side. Residues 83 to 99 (IDVSLIPPLILLPVFLH) traverse the membrane as a helical segment. Topologically, residues 100-105 (IAALHY) are lumenal. A helical membrane pass occupies residues 106–125 (LLGIIMLTAMPITVLWYYFF). The Cytoplasmic segment spans residues 126 to 132 (THRKKGR). A helical membrane pass occupies residues 133–153 (TLFFLGLALFSLFYMFYLFLT). Over 154–160 (QVVPRGE) the chain is Lumenal. Residues 161 to 181 (VTELQLAVVTAGVALTVIFLM) traverse the membrane as a helical segment. The Cytoplasmic portion of the chain corresponds to 182–294 (LTKRGPGLVR…SCVGLANHRT (113 aa)). Residues 250–300 (NWCAVCKVVRPQRAGHCRICGVCVLRLDHHCVWINSCVGLANHRTFLLTLL) enclose the DHHC domain. Cysteine 280 functions as the S-palmitoyl cysteine intermediate in the catalytic mechanism. The chain crosses the membrane as a helical span at residues 295–315 (FLLTLLFFLLTSIYGISLVLA). At 316 to 350 (SVCPDQRVLTALFYCPDVYSQYSSALCFTCAWYSS) the chain is on the lumenal side. The helical transmembrane segment at 351-371 (IVTGGLLHLLLLQILNISLNV) threads the bilayer. The Cytoplasmic portion of the chain corresponds to 372 to 428 (TEREARLALREKSAQRRLWGLIVHTGHYSRGFWSNWTEFLTMTEDTQPAGHKTEDLV).

The protein belongs to the DHHC palmitoyltransferase family.

The protein resides in the golgi apparatus membrane. It localises to the golgi apparatus. It is found in the trans-Golgi network membrane. The enzyme catalyses L-cysteinyl-[protein] + hexadecanoyl-CoA = S-hexadecanoyl-L-cysteinyl-[protein] + CoA. In terms of biological role, palmitoyltransferase that could catalyze the addition of palmitate onto various protein substrates and be involved in a variety of cellular processes. This is Palmitoyltransferase ZDHHC23-B from Danio rerio (Zebrafish).